We begin with the raw amino-acid sequence, 117 residues long: Ribosome-binding factor A (117 aa).

The protein belongs to the RbfA family. As to quaternary structure, monomer. Binds 30S ribosomal subunits, but not 50S ribosomal subunits or 70S ribosomes.

It is found in the cytoplasm. One of several proteins that assist in the late maturation steps of the functional core of the 30S ribosomal subunit. Associates with free 30S ribosomal subunits (but not with 30S subunits that are part of 70S ribosomes or polysomes). Required for efficient processing of 16S rRNA. May interact with the 5'-terminal helix region of 16S rRNA. The chain is Ribosome-binding factor A from Anaplasma marginale (strain St. Maries).